A 418-amino-acid chain; its full sequence is UDP-N-acetylglucosamine 1-carboxyvinyltransferase (418 aa).

22-23 (KN) is a binding site for phosphoenolpyruvate. Arginine 91 lines the UDP-N-acetyl-alpha-D-glucosamine pocket. Cysteine 115 (proton donor) is an active-site residue. At cysteine 115 the chain carries 2-(S-cysteinyl)pyruvic acid O-phosphothioketal. UDP-N-acetyl-alpha-D-glucosamine is bound by residues aspartate 303 and isoleucine 325.

It belongs to the EPSP synthase family. MurA subfamily.

It is found in the cytoplasm. The catalysed reaction is phosphoenolpyruvate + UDP-N-acetyl-alpha-D-glucosamine = UDP-N-acetyl-3-O-(1-carboxyvinyl)-alpha-D-glucosamine + phosphate. It participates in cell wall biogenesis; peptidoglycan biosynthesis. Cell wall formation. Adds enolpyruvyl to UDP-N-acetylglucosamine. This is UDP-N-acetylglucosamine 1-carboxyvinyltransferase from Syntrophobacter fumaroxidans (strain DSM 10017 / MPOB).